A 290-amino-acid polypeptide reads, in one-letter code: Cilia- and flagella-associated protein 298 (290 aa).

The protein belongs to the CFAP298 family. Interacts with dnaaf1/swt. Interacts with lrrc6/sea. Interacts with dvl (via DEP and PDZ domains). In terms of tissue distribution, strongly expressed in ciliated tissues of the embryonic trunk, including the pronephric ducts and spinal canal.

It localises to the cytoplasm. It is found in the cytoskeleton. Its subcellular location is the cilium basal body. Its function is as follows. Plays a role in motile cilium function, possibly by acting on outer dynein arm assembly. Seems to be important for initiation rather than maintenance of cilium motility. Required for correct positioning of cilia at the apical cell surface, suggesting an additional role in the planar cell polarity (PCP) pathway. May suppress canonical Wnt signaling activity. The protein is Cilia- and flagella-associated protein 298 of Danio rerio (Zebrafish).